The following is a 71-amino-acid chain: MAKQAAIEQDGTIIEALSNAMFRVELENGHVVTAHISGKMRMHYIKLLPGDKVKLEMSPYDLTKARITYRY.

One can recognise an S1-like domain in the interval 1–71; that stretch reads MAKQAAIEQD…LTKARITYRY (71 aa).

This sequence belongs to the IF-1 family. As to quaternary structure, component of the 30S ribosomal translation pre-initiation complex which assembles on the 30S ribosome in the order IF-2 and IF-3, IF-1 and N-formylmethionyl-tRNA(fMet); mRNA recruitment can occur at any time during PIC assembly.

The protein localises to the cytoplasm. In terms of biological role, one of the essential components for the initiation of protein synthesis. Stabilizes the binding of IF-2 and IF-3 on the 30S subunit to which N-formylmethionyl-tRNA(fMet) subsequently binds. Helps modulate mRNA selection, yielding the 30S pre-initiation complex (PIC). Upon addition of the 50S ribosomal subunit IF-1, IF-2 and IF-3 are released leaving the mature 70S translation initiation complex. This is Translation initiation factor IF-1 from Christiangramia forsetii (strain DSM 17595 / CGMCC 1.15422 / KT0803) (Gramella forsetii).